Consider the following 255-residue polypeptide: Ribonuclease HII (255 aa).

The 186-residue stretch at 70 to 255 folds into the RNase H type-2 domain; it reads ELIAGVDEVG…FEPIKSIIKK (186 aa). The a divalent metal cation site is built by Asp-76, Glu-77, and Asp-168.

This sequence belongs to the RNase HII family. Mn(2+) serves as cofactor. It depends on Mg(2+) as a cofactor.

It localises to the cytoplasm. The catalysed reaction is Endonucleolytic cleavage to 5'-phosphomonoester.. In terms of biological role, endonuclease that specifically degrades the RNA of RNA-DNA hybrids. In Streptococcus thermophilus (strain ATCC BAA-491 / LMD-9), this protein is Ribonuclease HII.